The following is a 492-amino-acid chain: Beta-Ala-His dipeptidase (492 aa).

A Zn(2+)-binding site is contributed by H107. The active site involves D109. D140 lines the Zn(2+) pocket. E174 (proton acceptor) is an active-site residue. E175 is a binding site for Zn(2+). Residue S194 is modified to Phosphoserine. Zn(2+)-binding residues include D203 and H453.

Belongs to the peptidase M20A family. Homodimer. It depends on Zn(2+) as a cofactor. Detected exclusively in kidney.

It is found in the secreted. The enzyme catalyses Preferential hydrolysis of the beta-Ala-|-His dipeptide (carnosine), and also anserine, Xaa-|-His dipeptides and other dipeptides including homocarnosine.. It catalyses the reaction carnosine + H2O = beta-alanine + L-histidine. The catalysed reaction is anserine + H2O = N(pros)-methyl-L-histidine + beta-alanine. It carries out the reaction L-alanyl-L-histidine + H2O = L-histidine + L-alanine. The enzyme catalyses glycyl-L-histidine + H2O = L-histidine + glycine. It catalyses the reaction L-homocarnosine + H2O = 4-aminobutanoate + L-histidine. Its function is as follows. Catalyzes the peptide bond hydrolysis in Xaa-His dipeptides, displaying the highest activity toward carnosine (beta-alanyl-L-histidine) and anserine (beta-alanyl-3-methyl-histidine). This Mus musculus (Mouse) protein is Beta-Ala-His dipeptidase (Cndp1).